Here is a 55-residue protein sequence, read N- to C-terminus: Large ribosomal subunit protein bL33 (55 aa).

It belongs to the bacterial ribosomal protein bL33 family.

The protein is Large ribosomal subunit protein bL33 of Bartonella henselae (strain ATCC 49882 / DSM 28221 / CCUG 30454 / Houston 1) (Rochalimaea henselae).